A 624-amino-acid polypeptide reads, in one-letter code: Membrane protein insertase YidC (624 aa).

A helical membrane pass occupies residues 8–28; that stretch reads MIIAIALSLAVLLGWNYFVTA. The disordered stretch occupies residues 36 to 95; sequence QQQAAQVNPSQGVNPSQGVDPSQGVNASPSPKEGGPSAPVPGTLPGAAGGSPQAALARDE. A compositionally biased stretch (polar residues) spans 43 to 64; that stretch reads NPSQGVNPSQGVDPSQGVNASP. The next 5 helical transmembrane spans lie at 370 to 390, 396 to 416, 470 to 490, 526 to 542, and 559 to 579; these read FDLL…FKAL, LFGN…LFFL, WPVL…FVTI, LLHL…TMFL, and FTFM…GLVI.

This sequence belongs to the OXA1/ALB3/YidC family. Type 1 subfamily. As to quaternary structure, interacts with the Sec translocase complex via SecD. Specifically interacts with transmembrane segments of nascent integral membrane proteins during membrane integration.

The protein localises to the cell inner membrane. Functionally, required for the insertion and/or proper folding and/or complex formation of integral membrane proteins into the membrane. Involved in integration of membrane proteins that insert both dependently and independently of the Sec translocase complex, as well as at least some lipoproteins. Aids folding of multispanning membrane proteins. The sequence is that of Membrane protein insertase YidC from Methylobacterium sp. (strain 4-46).